The chain runs to 153 residues: Ribosomal RNA large subunit methyltransferase H (153 aa).

S-adenosyl-L-methionine-binding positions include Leu70, Gly102, and 121-126; that span reads LSRMTF.

Belongs to the RNA methyltransferase RlmH family. As to quaternary structure, homodimer.

The protein localises to the cytoplasm. It catalyses the reaction pseudouridine(1915) in 23S rRNA + S-adenosyl-L-methionine = N(3)-methylpseudouridine(1915) in 23S rRNA + S-adenosyl-L-homocysteine + H(+). Its function is as follows. Specifically methylates the pseudouridine at position 1915 (m3Psi1915) in 23S rRNA. The polypeptide is Ribosomal RNA large subunit methyltransferase H (Geotalea daltonii (strain DSM 22248 / JCM 15807 / FRC-32) (Geobacter daltonii)).